The sequence spans 602 residues: Probable HECT-type ubiquitin ligase-interacting protein creD (602 aa).

Disordered regions lie at residues 375–398 (EVDPSGYRTPGPGSGPGTPFGALS) and 457–499 (TADY…MATP). Over residues 463–475 (PSSGSNSHSPASP) the composition is skewed to low complexity. The segment covering 477–492 (LSRRPSDEGYRDHDHI) has biased composition (basic and acidic residues).

Belongs to the arrestin family. Interacts with hulA.

Functionally, component of the regulatory network controlling carbon source utilization through ubiquitination and deubiquitination involving creA, creB, creC, creD and acrB. May be involved in signaling by recognizing appropriately phosphorylated substrates via its arrestin domains and then recruit a HECT-type ubiquitin ligase such as hulA, leading to ubiquitination of the substrate, providing a link between ubiquitination and phosphorylation in protein regulation and stability. This is Probable HECT-type ubiquitin ligase-interacting protein creD (creD) from Aspergillus clavatus (strain ATCC 1007 / CBS 513.65 / DSM 816 / NCTC 3887 / NRRL 1 / QM 1276 / 107).